Consider the following 125-residue polypeptide: Protein MGF 360-9L (125 aa).

It belongs to the asfivirus MGF 360 family. As to quaternary structure, interacts with host STAT1; this interaction mediates STAT1 degradation through apoptosis. Interacts with host STAT2; this interaction mediates STAT2 degradation through the proteasome.

It is found in the host cytoplasm. Functionally, plays a role in virus cell tropism, and may be required for efficient virus replication in macrophages. In addition, inhibits IFN-beta-induced IFN-stimulated genes (ISGs) transcription. Mechanistically, degrades host STAT1 and STAT2 through apoptosis and ubiquitin-proteasome pathways respectively. In African swine fever virus (strain Badajoz 1971 Vero-adapted) (Ba71V), this protein is Protein MGF 360-9L.